The sequence spans 554 residues: MIYPKIALAQSIIEICSAKGIYNIIISPGSRNAPLTIGFAQNPNFKCYSIADERCAAFFALGIAQQTQKPAAVVCTSGSALLNYYPAVAEAFYSQIPLIVISADRPQSKIDIGDGQTIRQENVFLNHSVFNANLTEDASVENDLKINKAIETAILQKGPVHINAPFEEPLYQTVSELSVEPKITNLEEFLETKIIENEDEIVSIWNSSKRKLILIGGINEANSIDDAVLENFAKDPSIVVLTETTSNLHHPSFINSIDSLITPFDDSDFKELEPEVLITFGGMIVSKRIKAFLRKYKPVHHWHIDTLRAYDTFNALSKHFVMEPNDFFKNLLPKTEFVTSKYFSKIDKIYDLRKIKKKQYLSKIGFSDFKVFEKVIESLPKNSQLQISNSSAIRYAQLIEIDPSIEVFCNRGTSGIDGSTSTAVGAAVGSGKPNVFITGDISFLYDSNALWNSYIPKNFKIILINNGGGGIFRILPGHQEKPVFNTYFETSHHLTAEHLAKMYQCSYFKADDLSSLNENLELLYNSNEAPGILEVFTPTFENDVILKQYFKELT.

The protein belongs to the TPP enzyme family. MenD subfamily. In terms of assembly, homodimer. The cofactor is Mg(2+). It depends on Mn(2+) as a cofactor. Thiamine diphosphate serves as cofactor.

It catalyses the reaction isochorismate + 2-oxoglutarate + H(+) = 5-enolpyruvoyl-6-hydroxy-2-succinyl-cyclohex-3-ene-1-carboxylate + CO2. It participates in quinol/quinone metabolism; 1,4-dihydroxy-2-naphthoate biosynthesis; 1,4-dihydroxy-2-naphthoate from chorismate: step 2/7. It functions in the pathway quinol/quinone metabolism; menaquinone biosynthesis. In terms of biological role, catalyzes the thiamine diphosphate-dependent decarboxylation of 2-oxoglutarate and the subsequent addition of the resulting succinic semialdehyde-thiamine pyrophosphate anion to isochorismate to yield 2-succinyl-5-enolpyruvyl-6-hydroxy-3-cyclohexene-1-carboxylate (SEPHCHC). This is 2-succinyl-5-enolpyruvyl-6-hydroxy-3-cyclohexene-1-carboxylate synthase from Flavobacterium johnsoniae (strain ATCC 17061 / DSM 2064 / JCM 8514 / BCRC 14874 / CCUG 350202 / NBRC 14942 / NCIMB 11054 / UW101) (Cytophaga johnsonae).